The following is a 518-amino-acid chain: Nuclear receptor ROR-gamma (518 aa).

The segment at 1–30 (MDRAPQRQHQASRELLAAKKTHTSQIEVIP) is modulating. 2 NR C4-type zinc fingers span residues 31-51 (CKIC…CEGC) and 67-91 (CTRQ…LQKC). A DNA-binding region (nuclear receptor) is located at residues 31–96 (CKICGDKSSG…RLQKCLALGM (66 aa)). 2 disordered regions span residues 105–183 (RMSK…SGSG) and 238–258 (HPGL…SFRS). A compositionally biased stretch (basic and acidic residues) spans 109–118 (KQRDSLHAEV). The span at 119 to 130 (QKQLQQRQQQQQ) shows a compositional bias: low complexity. Positions 269–508 (EIEHLVQSVC…PPLYKELFST (240 aa)) constitute an NR LBD domain. The AF-2 signature appears at 501 to 506 (LYKELF).

This sequence belongs to the nuclear hormone receptor family. NR1 subfamily. In terms of assembly, interacts (via AF-2 motif) with the coactivators NCOA1, NCOA2 and PPARGC1A (via LXXLL motif). Interacts with the corepressor NCOR1. Interacts with CRY1. Interacts (via AF-2 motif) with PROX1. Interacts with FOXP3. Interacts with NR0B2.

The protein localises to the nucleus. Nuclear receptor that binds DNA as a monomer to ROR response elements (RORE) containing a single core motif half-site 5'-AGGTCA-3' preceded by a short A-T-rich sequence. Key regulator of cellular differentiation, immunity, peripheral circadian rhythm as well as lipid, steroid, xenobiotics and glucose metabolism. Considered to have intrinsic transcriptional activity, have some natural ligands like oxysterols that act as agonists (25-hydroxycholesterol) or inverse agonists (7-oxygenated sterols), enhancing or repressing the transcriptional activity, respectively. Recruits distinct combinations of cofactors to target gene regulatory regions to modulate their transcriptional expression, depending on the tissue, time and promoter contexts. Regulates the circadian expression of clock genes such as CRY1, BMAL1 and NR1D1 in peripheral tissues and in a tissue-selective manner. Competes with NR1D1 for binding to their shared DNA response element on some clock genes such as BMAL1, CRY1 and NR1D1 itself, resulting in NR1D1-mediated repression or RORC-mediated activation of the expression, leading to the circadian pattern of clock genes expression. Therefore influences the period length and stability of the clock. Involved in the regulation of the rhythmic expression of genes involved in glucose and lipid metabolism, including PLIN2 and AVPR1A. Negative regulator of adipocyte differentiation through the regulation of early phase genes expression, such as MMP3. Controls adipogenesis as well as adipocyte size and modulates insulin sensitivity in obesity. In liver, has specific and redundant functions with RORA as positive or negative modulator of expression of genes encoding phase I and Phase II proteins involved in the metabolism of lipids, steroids and xenobiotics, such as SULT1E1. Also plays a role in the regulation of hepatocyte glucose metabolism through the regulation of G6PC1 and PCK1. Essential for thymopoiesis and the development of several secondary lymphoid tissues, including lymph nodes and Peyer's patches. Required for the generation of LTi (lymphoid tissue inducer) cells. Regulates thymocyte survival through DNA-binding on ROREs of target gene promoter regions and recruitment of coactivaros via the AF-2. Also plays a key role, downstream of IL6 and TGFB and synergistically with RORA, for lineage specification of uncommitted CD4(+) T-helper (T(H)) cells into T(H)17 cells, antagonizing the T(H)1 program. Probably regulates IL17 and IL17F expression on T(H) by binding to the essential enhancer conserved non-coding sequence 2 (CNS2) in the IL17-IL17F locus. May also play a role in the pre-TCR activation cascade leading to the maturation of alpha/beta T-cells and may participate in the regulation of DNA accessibility in the TCR-J(alpha) locus. Regulates the rhythmic expression of PROX1 and promotes its nuclear localization. Plays an indispensable role in the induction of IFN-gamma dependent anti-mycobacterial systemic immunity. The chain is Nuclear receptor ROR-gamma (RORC) from Pongo abelii (Sumatran orangutan).